The following is a 1762-amino-acid chain: Non-reducing polyketide synthase PKS8-1 (1762 aa).

The segment at 17–247 (DIYRGLHNHS…ARYIELPVYG (231 aa)) is N-terminal acylcarrier protein transacylase domain (SAT). The Ketosynthase family 3 (KS3) domain occupies 385–819 (QSKLAITGIS…GGNTTMVLEE (435 aa)). Residues C558, H694, and H737 each act as for beta-ketoacyl synthase activity in the active site. Residues 920 to 1240 (FSFTGQGASH…MAALHLTGVA (321 aa)) are malonyl-CoA:ACP transacylase (MAT) domain. The segment at 1308-1622 (TSTVQQVIAL…PRILLNRFFS (315 aa)) is product template (PT) domain. The segment at 1312-1448 (QQVIALEVEG…GDANDWLSSW (137 aa)) is N-terminal hotdog fold. A PKS/mFAS DH domain is found at 1312–1618 (QQVIALEVEG…FRSYPRILLN (307 aa)). H1344 acts as the Proton acceptor; for dehydratase activity in catalysis. Residues 1471–1618 (ASRFTRNMAY…FRSYPRILLN (148 aa)) form a C-terminal hotdog fold region. The Proton donor; for dehydratase activity role is filled by D1529. Residues 1632 to 1689 (RAGNAATVTPQVTIPKPPSSLKTPAPANPSRRDSGVESKPLPPPQPKQAPPSTDSENS) are disordered. Pro residues predominate over residues 1671 to 1680 (PLPPPQPKQA). The Carrier domain maps to 1685-1762 (DSENSTISKA…DMRRWLEEHY (78 aa)). At S1722 the chain carries O-(pantetheine 4'-phosphoryl)serine.

The catalysed reaction is holo-[ACP] + 8 malonyl-CoA + 8 H(+) = atrochrysone carboxyl-[ACP] + 8 CO2 + 8 CoA + 2 H2O. It functions in the pathway secondary metabolite biosynthesis. Non-reducing polyketide synthase; part of the gene cluster that mediates the biosynthesis of an emodin derivative that may be involved in black Sigatoka disease of banana. The pathway begins with the synthesis of atrochrysone thioester by the polyketide synthase PKS8-1. The atrochrysone carboxyl ACP thioesterase MYCFIDRAFT_190111 then breaks the thioester bond and releases the atrochrysone carboxylic acid from PKS8-1. The decarboxylase MYCFIDRAFT_34057 then catalyzes the concerted decarboxylation-elimination required to convert atochrysone carboxylic acid into emodin anthrone, which is further oxidized to emodin by the anthrone oxygenase MYCFIDRAFT_34418. The functions of the other tailoring enzymes as well as the final product of the cluster have still to be identified. The chain is Non-reducing polyketide synthase PKS8-1 (PKS8-1) from Pseudocercospora fijiensis (strain CIRAD86) (Black leaf streak disease fungus).